Consider the following 159-residue polypeptide: Crossover junction endodeoxyribonuclease RuvC (159 aa).

Residues D7, E67, and D139 contribute to the active site. Residues D7, E67, and D139 each coordinate Mg(2+).

Belongs to the RuvC family. In terms of assembly, homodimer which binds Holliday junction (HJ) DNA. The HJ becomes 2-fold symmetrical on binding to RuvC with unstacked arms; it has a different conformation from HJ DNA in complex with RuvA. In the full resolvosome a probable DNA-RuvA(4)-RuvB(12)-RuvC(2) complex forms which resolves the HJ. The cofactor is Mg(2+).

Its subcellular location is the cytoplasm. The catalysed reaction is Endonucleolytic cleavage at a junction such as a reciprocal single-stranded crossover between two homologous DNA duplexes (Holliday junction).. The RuvA-RuvB-RuvC complex processes Holliday junction (HJ) DNA during genetic recombination and DNA repair. Endonuclease that resolves HJ intermediates. Cleaves cruciform DNA by making single-stranded nicks across the HJ at symmetrical positions within the homologous arms, yielding a 5'-phosphate and a 3'-hydroxyl group; requires a central core of homology in the junction. The consensus cleavage sequence is 5'-(A/T)TT(C/G)-3'. Cleavage occurs on the 3'-side of the TT dinucleotide at the point of strand exchange. HJ branch migration catalyzed by RuvA-RuvB allows RuvC to scan DNA until it finds its consensus sequence, where it cleaves and resolves the cruciform DNA. The sequence is that of Crossover junction endodeoxyribonuclease RuvC from Orientia tsutsugamushi (strain Boryong) (Rickettsia tsutsugamushi).